We begin with the raw amino-acid sequence, 562 residues long: Arylsulfatase H (562 aa).

Ca(2+) is bound by residues Asp-15, Asp-16, and Cys-55. Residue Cys-55 is the Nucleophile of the active site. Cys-55 is subject to 3-oxoalanine (Cys). Residue Lys-115 participates in substrate binding. Residue His-117 is part of the active site. Transmembrane regions (helical) follow at residues 167–187 and 189–209; these read LWISTAVLSLVPLLLLIPKYA and WFVVPWKVILTFALLAFLFFI. His-271 contacts substrate. The Ca(2+) site is built by Asp-323 and Asn-324.

Belongs to the sulfatase family. Ca(2+) serves as cofactor. In terms of processing, the conversion to 3-oxoalanine (also known as C-formylglycine, FGly), of a serine or cysteine residue in prokaryotes and of a cysteine residue in eukaryotes, is critical for catalytic activity.

Its subcellular location is the membrane. This Canis lupus familiaris (Dog) protein is Arylsulfatase H (ARSH).